Reading from the N-terminus, the 327-residue chain is Aquaporin-1 (327 aa).

A disordered region spans residues 1-34 (MSSNDSNDTDKQHTRLDPTGVDDAYIPPEQPETK). Residues 1-48 (MSSNDSNDTDKQHTRLDPTGVDDAYIPPEQPETKHHRFKISRDTLRNH) are Cytoplasmic-facing. Residues 49-69 (FIAAVGEFCGTFMFLWCAYVI) traverse the membrane as a helical segment. Residues 70-91 (CNVANHDVALVAAPDGSHPGQL) are Extracellular-facing. Residues 92–112 (IMIAIGFGFSVMFSIWCFAGV) traverse the membrane as a helical segment. Over 113–136 (SGGALNPAVSLSLCLARAVSPTRC) the chain is Cytoplasmic. An NPA 1 motif is present at residues 118-120 (NPA). Residues 137-157 (VVMWVSQIVAGMAAGGAASAM) traverse the membrane as a helical segment. Residues 158-176 (TPGEVLFANSLGLGCSRTR) are Extracellular-facing. The helical transmembrane segment at 177–197 (GLFLEMFGTAILCLTVLMTAV) threads the bilayer. Residues 198 to 203 (EKRETN) are Cytoplasmic-facing. A helical transmembrane segment spans residues 204 to 224 (FMAALPIGISLFIAHVALTAY). The Extracellular segment spans residues 225 to 248 (TGTGVNPARSLGAAVAARYFPHYH). The NPA 2 motif lies at 230 to 232 (NPA). A helical membrane pass occupies residues 249–269 (WIYWIGPLLGSILAWSVWQLL). Over 270 to 327 (QILDYTTYVTAEKAASTKEKAQKKVKPAVPLLWLKSNFPLLFFISRSLALNVIIFGKN) the chain is Cytoplasmic.

The protein belongs to the MIP/aquaporin (TC 1.A.8) family.

The protein localises to the endoplasmic reticulum membrane. Its subcellular location is the cell membrane. Water channel required to facilitate the transport of water across membranes. Involved in sporulation, freeze tolerance and osmotolerance. Is non-functional in most laboratory strains. The polypeptide is Aquaporin-1 (AQY1) (Saccharomyces cerevisiae (Baker's yeast)).